We begin with the raw amino-acid sequence, 304 residues long: Phospholipase A1 (304 aa).

An intrachain disulfide couples Cys6 to Cys90. N-linked (GlcNAc...) asparagine glycosylation is present at Asn61. The Nucleophile role is filled by Ser140. The active-site Charge relay system is Asp168. Cystine bridges form between Cys179/Cys184 and Cys222/Cys231. Catalysis depends on His233, which acts as the Charge relay system. Disulfide bonds link Cys248–Cys272, Cys249–Cys297, and Cys265–Cys270.

The protein belongs to the AB hydrolase superfamily. Lipase family. In terms of tissue distribution, expressed by the venom gland.

Its subcellular location is the secreted. It carries out the reaction a 1,2-diacyl-sn-glycero-3-phosphocholine + H2O = a 2-acyl-sn-glycero-3-phosphocholine + a fatty acid + H(+). Its function is as follows. Catalyzes the hydrolysis of phosphatidylcholine with phospholipase A1 activity. May act as an allergen and induce hemolytic activity. The sequence is that of Phospholipase A1 from Vespa velutina (Asian yellow-legged hornet).